The sequence spans 323 residues: Quinolinate synthase (323 aa).

His37 and Ser54 together coordinate iminosuccinate. Residue Cys99 coordinates [4Fe-4S] cluster. Iminosuccinate is bound by residues 125-127 (YIN) and Ser142. Cys185 is a binding site for [4Fe-4S] cluster. Residues 211-213 (HPE) and Thr228 each bind iminosuccinate. Residue Cys278 coordinates [4Fe-4S] cluster.

This sequence belongs to the quinolinate synthase family. Type 2 subfamily. It depends on [4Fe-4S] cluster as a cofactor.

The protein resides in the cytoplasm. The enzyme catalyses iminosuccinate + dihydroxyacetone phosphate = quinolinate + phosphate + 2 H2O + H(+). It participates in cofactor biosynthesis; NAD(+) biosynthesis; quinolinate from iminoaspartate: step 1/1. Catalyzes the condensation of iminoaspartate with dihydroxyacetone phosphate to form quinolinate. The chain is Quinolinate synthase from Trichodesmium erythraeum (strain IMS101).